The following is a 175-amino-acid chain: Disulfide bond formation protein B 2 (175 aa).

Residues Met1–Leu9 are Cytoplasmic-facing. Residues Phe10–Tyr26 traverse the membrane as a helical segment. Topologically, residues Leu27 to Ala44 are periplasmic. A disulfide bond links Cys36 and Cys39. A helical membrane pass occupies residues Ala45–Pro61. The Cytoplasmic portion of the chain corresponds to Gly62–Arg68. The helical transmembrane segment at Tyr69–Gly85 threads the bilayer. The Periplasmic segment spans residues Ala86–Glu142. A helical transmembrane segment spans residues Trp143–Ser161. Residues Glu162–Tyr175 are Cytoplasmic-facing.

It belongs to the DsbB family.

It localises to the cell inner membrane. Required for disulfide bond formation in some periplasmic proteins. Acts by oxidizing the DsbA protein. In Pseudomonas savastanoi pv. phaseolicola (strain 1448A / Race 6) (Pseudomonas syringae pv. phaseolicola (strain 1448A / Race 6)), this protein is Disulfide bond formation protein B 2.